The sequence spans 289 residues: tRNA pseudouridine synthase B (289 aa).

D38 acts as the Nucleophile in catalysis.

It belongs to the pseudouridine synthase TruB family. Type 1 subfamily.

The enzyme catalyses uridine(55) in tRNA = pseudouridine(55) in tRNA. In terms of biological role, responsible for synthesis of pseudouridine from uracil-55 in the psi GC loop of transfer RNAs. In Acaryochloris marina (strain MBIC 11017), this protein is tRNA pseudouridine synthase B.